Consider the following 152-residue polypeptide: Acyl carrier protein, mitochondrial (152 aa).

The 76-residue stretch at 73 to 148 folds into the Carrier domain; that stretch reads KLINERVLLV…DIIKYVADKE (76 aa). Ser108 carries the O-(pantetheine 4'-phosphoryl)serine modification.

This sequence belongs to the acyl carrier protein (ACP) family. As to quaternary structure, complex I is composed of about 45 different subunits.

The protein localises to the mitochondrion. In terms of biological role, carrier of the growing fatty acid chain in fatty acid biosynthesis. Accessory and non-catalytic subunit of the mitochondrial membrane respiratory chain NADH dehydrogenase (Complex I), which functions in the transfer of electrons from NADH to the respiratory chain. This is Acyl carrier protein, mitochondrial from Drosophila melanogaster (Fruit fly).